A 257-amino-acid polypeptide reads, in one-letter code: Adenylate kinase (257 aa).

51 to 56 provides a ligand contact to ATP; it reads GAGKGT. The tract at residues 71–100 is NMP; sequence ATGDMLRSQVAKKTELGKEAKKIMDQGGLV. AMP contacts are provided by residues threonine 72, arginine 77, 98–100, 127–130, and glutamine 134; these read GLV and GFPR. An LID region spans residues 168–205; the sequence is GRLVHPASGRSYHKIFNPPKQEMKDDITGEPLIQRSDD. Residues arginine 169 and 178-179 contribute to the ATP site; that span reads SY. Arginine 202 and arginine 213 together coordinate AMP. Glutamine 241 provides a ligand contact to ATP.

The protein belongs to the adenylate kinase family. AK2 subfamily. As to quaternary structure, monomer.

It localises to the cytoplasm. It is found in the cytosol. The protein resides in the mitochondrion intermembrane space. It catalyses the reaction AMP + ATP = 2 ADP. Catalyzes the reversible transfer of the terminal phosphate group between ATP and AMP. Plays an important role in cellular energy homeostasis and in adenine nucleotide metabolism. Adenylate kinase activity is critical for regulation of the phosphate utilization and the AMP de novo biosynthesis pathways. In Aspergillus terreus (strain NIH 2624 / FGSC A1156), this protein is Adenylate kinase (adk1).